Here is a 610-residue protein sequence, read N- to C-terminus: Myoneurin (610 aa).

The BTB domain occupies 24-89 (CDCTVVIGEF…IYTGTLNLDS (66 aa)). The tract at residues 156 to 199 (SEVSTDSVQANPKPRALTKKSSQSKKKKKAFSSQKPGQSKAVQY) is disordered. Residues 171 to 185 (ALTKKSSQSKKKKKA) show a composition bias toward basic residues. Short sequence motifs (nuclear localization signal) lie at residues 174–190 (KKSSQSKKKKKAFSSQK) and 257–262 (KRKRRK). 8 consecutive C2H2-type zinc fingers follow at residues 302-324 (PMCNTCGKVFSEASSLRRHMRIH), 330-352 (YVCHLCGKAFTQCNQLKTHVRTH), 358-381 (YKCELCDKGFAQKCQLVFHSRMHH), 387-409 (YKCDVCNLQFATSSNLKIHARKH), 415-437 (YVCDRCGQRFAQASTLTYHVRRH), 443-465 (YVCDTCGKAFAVSSSLITHSRKH), 471-493 (YICGICGKSFISSGELNKHFRSH), and 499-522 (FICELCGNSYTDIKNLKKHKTKVH). Positions 519–548 (TKVHSGTDKNPDCSVDDHAVSEQDSVQRSP) are disordered. Positions 523-539 (SGTDKNPDCSVDDHAVS) are enriched in basic and acidic residues.

The protein belongs to the krueppel C2H2-type zinc-finger protein family. Mainly expressed in the neuromuscular system. Located in and around synaptic myonuclei in adult muscle. Expression is dysregulated after nerve injury. Also found in the cerebellum, testis, heart, brain and liver.

It is found in the nucleus. This is Myoneurin (Mynn) from Mus musculus (Mouse).